The sequence spans 544 residues: MRVAVAGCCHGELDKIYETLALAERRGPGPVDLLLCCGDFQAVRNEADLRCMAVPPKYRHMQTFYRYYSGEKKAPVLTLFIGGNHEASNHLQELPYGGWVAPNIYYLGLAGVVKYRGVRIGGISGIFKSHDYRKGHFECPPYNSSTIRSIYHVRNIEVYKLKQLKQPIDIFLSHDWPRSIYHYGNKKQLLKTKSFFRQEVENNTLGSPAASELLEHLKPTYWFSAHLHVKFAALMQHQAKDKGQTARATKFLALDKCLPHRDFLQILEIEHDPSAPDYLEYDIEWLTILRATDDLINVTGRLWNMPENNGLHARWDYSATEEGMKEVLEKLNHDLKVPCNFSVTAACYDPSKPQTQMQLIHRINPQTTEFCAQLGIIDINVRLQKSKEEHHVCGEYEEQDDVESNDSGEDQSEYNTDTSALSSINPDEIMLDEEEDEDSIVSAHSGMNTPSVEPSDQASEFSASFSDVRILPGSMIVSSDDTVDSTIDREGKPGGTVESGNGEDLTKVPLKRLSDEHEPEQRKKIKRRNQAIYAAVDDDDDDAA.

Residues Cys-8, His-10, Asp-39, and Asn-84 each coordinate a divalent metal cation. Residues 124–154 (SGIFKSHDYRKGHFECPPYNSSTIRSIYHVR) are lariat recognition loop. Position 128 is an N6-acetyllysine (Lys-128). His-174, His-226, and His-228 together coordinate a divalent metal cation. The segment covering 395–412 (EYEEQDDVESNDSGEDQS) has biased composition (acidic residues). A disordered region spans residues 395–463 (EYEEQDDVES…PSDQASEFSA (69 aa)). Residues 413-425 (EYNTDTSALSSIN) show a composition bias toward polar residues. Acidic residues predominate over residues 429 to 439 (IMLDEEEDEDS). Over residues 445 to 463 (SGMNTPSVEPSDQASEFSA) the composition is skewed to polar residues. A phosphoserine mark is found at Ser-464, Ser-474, Ser-478, Ser-479, Ser-485, Ser-499, and Ser-514. The interval 476–544 (IVSSDDTVDS…AVDDDDDDAA (69 aa)) is disordered. Basic and acidic residues predominate over residues 512–522 (RLSDEHEPEQR).

The protein belongs to the lariat debranching enzyme family. Fe(2+) is required as a cofactor. Requires Zn(2+) as cofactor. It depends on Mn(2+) as a cofactor. As to expression, ubiquitously expressed, strongest expression in the spinal cord and brainstem.

It is found in the nucleus. Active in presence of diverse metals including Fe(2+), Zn(2+), Mn(2+). Also activated by Ca(2+). Binds two metal cations in two adjacent alpha and beta metal-binding pockets. Cleaves the 2'-5' phosphodiester linkage at the branch point of excised lariat intron RNA and converts them into linear molecules that can be subsequently degraded, thereby facilitating ribonucleotide turnover. Linked to its role in pre-mRNA processing mechanism, may also participate in retrovirus replication via an RNA lariat intermediate in cDNA synthesis and have an antiviral cell-intrinsic defense function in the brainstem. In Homo sapiens (Human), this protein is Lariat debranching enzyme (DBR1).